A 380-amino-acid chain; its full sequence is Flap endonuclease 1 (380 aa).

An N-domain region spans residues 1 to 104; it reads MGIQGLAKLI…GELAKRSERR (104 aa). A Symmetric dimethylarginine; by PRMT5 modification is found at arginine 19. Mg(2+) is bound at residue aspartate 34. Positions 47 and 70 each coordinate DNA. Lysine 80 carries the N6-acetyllysine modification. A Mg(2+)-binding site is contributed by aspartate 86. Residues arginine 100 and arginine 104 each carry the symmetric dimethylarginine; by PRMT5 modification. The interval 122–253 is I-domain; it reads EVEKFTKRLV…KRAVDLIQKH (132 aa). Residues glutamate 158, glutamate 160, aspartate 179, and aspartate 181 each coordinate Mg(2+). Glutamate 158 is a binding site for DNA. Phosphoserine; by CDK2 is present on serine 187. Arginine 192 is modified (symmetric dimethylarginine; by PRMT5). Serine 197 bears the Phosphoserine mark. 2 residues coordinate DNA: glycine 231 and aspartate 233. Aspartate 233 is a binding site for Mg(2+). A phosphoserine mark is found at serine 255, serine 293, and serine 335. The segment at 327–380 is disordered; that stretch reads RLSKSRQGSTQGRLDDFFKVTGSLSSAKRKEPEPKGSTKKKAKTGAAGKFKRGK. At threonine 336 the chain carries Phosphothreonine. The tract at residues 336–344 is interaction with PCNA; it reads TQGRLDDFF. Lysine 354 is subject to N6-acetyllysine. A compositionally biased stretch (basic residues) spans 363-380; it reads STKKKAKTGAAGKFKRGK. Threonine 364 carries the post-translational modification Phosphothreonine. An N6-acetyllysine mark is found at lysine 375, lysine 377, and lysine 380.

Belongs to the XPG/RAD2 endonuclease family. FEN1 subfamily. In terms of assembly, interacts with PCNA. Three molecules of FEN1 bind to one PCNA trimer with each molecule binding to one PCNA monomer. PCNA stimulates the nuclease activity without altering cleavage specificity. The C-terminal domain binds EP300; can bind simultaneously to both PCNA and EP300. Interacts with DDX11; this interaction is direct and increases flap endonuclease activity of FEN1. Interacts with WDR4; regulating its endonuclease activity. Interacts with POLB. Mg(2+) serves as cofactor. In terms of processing, acetylated by EP300. Acetylation inhibits both endonuclease and exonuclease activity. Acetylation also reduces DNA-binding activity but does not affect interaction with PCNA or EP300. Post-translationally, phosphorylation upon DNA damage induces relocalization to the nuclear plasma. Phosphorylation at Ser-187 by CDK2 occurs during late S-phase and results in dissociation from PCNA. Methylation at Arg-192 by PRMT5 impedes Ser-187 phosphorylation and increases interaction with PCNA.

Its subcellular location is the nucleus. The protein resides in the nucleolus. The protein localises to the nucleoplasm. It localises to the mitochondrion. In terms of biological role, structure-specific nuclease with 5'-flap endonuclease and 5'-3' exonuclease activities involved in DNA replication and repair. During DNA replication, cleaves the 5'-overhanging flap structure that is generated by displacement synthesis when DNA polymerase encounters the 5'-end of a downstream Okazaki fragment. It enters the flap from the 5'-end and then tracks to cleave the flap base, leaving a nick for ligation. Also involved in the long patch base excision repair (LP-BER) pathway, by cleaving within the apurinic/apyrimidinic (AP) site-terminated flap. Acts as a genome stabilization factor that prevents flaps from equilibrating into structures that lead to duplications and deletions. Also possesses 5'-3' exonuclease activity on nicked or gapped double-stranded DNA, and exhibits RNase H activity. Also involved in replication and repair of rDNA and in repairing mitochondrial DNA. The chain is Flap endonuclease 1 from Homo sapiens (Human).